Consider the following 215-residue polypeptide: Transmembrane protein 267 (215 aa).

Helical transmembrane passes span 77-97 (FGEI…HFLL), 114-134 (FLHC…TMHF), and 178-198 (FWLY…VMYF).

It is found in the membrane. This chain is Transmembrane protein 267 (TMEM267), found in Bos taurus (Bovine).